We begin with the raw amino-acid sequence, 619 residues long: Dihydroxy-acid dehydratase (619 aa).

Aspartate 81 is a Mg(2+) binding site. Cysteine 122 provides a ligand contact to [2Fe-2S] cluster. Positions 123 and 124 each coordinate Mg(2+). The residue at position 124 (lysine 124) is an N6-carboxylysine. Residue cysteine 198 participates in [2Fe-2S] cluster binding. Glutamate 494 lines the Mg(2+) pocket. Catalysis depends on serine 520, which acts as the Proton acceptor.

Belongs to the IlvD/Edd family. As to quaternary structure, homodimer. [2Fe-2S] cluster serves as cofactor. Requires Mg(2+) as cofactor.

It carries out the reaction (2R)-2,3-dihydroxy-3-methylbutanoate = 3-methyl-2-oxobutanoate + H2O. The catalysed reaction is (2R,3R)-2,3-dihydroxy-3-methylpentanoate = (S)-3-methyl-2-oxopentanoate + H2O. Its pathway is amino-acid biosynthesis; L-isoleucine biosynthesis; L-isoleucine from 2-oxobutanoate: step 3/4. It functions in the pathway amino-acid biosynthesis; L-valine biosynthesis; L-valine from pyruvate: step 3/4. Its function is as follows. Functions in the biosynthesis of branched-chain amino acids. Catalyzes the dehydration of (2R,3R)-2,3-dihydroxy-3-methylpentanoate (2,3-dihydroxy-3-methylvalerate) into 2-oxo-3-methylpentanoate (2-oxo-3-methylvalerate) and of (2R)-2,3-dihydroxy-3-methylbutanoate (2,3-dihydroxyisovalerate) into 2-oxo-3-methylbutanoate (2-oxoisovalerate), the penultimate precursor to L-isoleucine and L-valine, respectively. The chain is Dihydroxy-acid dehydratase from Neisseria meningitidis serogroup A / serotype 4A (strain DSM 15465 / Z2491).